A 519-amino-acid chain; its full sequence is Probable DNA ligase (519 aa).

Position 211 (glutamate 211) interacts with ATP. The active-site N6-AMP-lysine intermediate is the lysine 213. Positions 218, 233, 262, 302, 374, and 380 each coordinate ATP.

Belongs to the ATP-dependent DNA ligase family. It depends on Mg(2+) as a cofactor.

It carries out the reaction ATP + (deoxyribonucleotide)n-3'-hydroxyl + 5'-phospho-(deoxyribonucleotide)m = (deoxyribonucleotide)n+m + AMP + diphosphate.. Its function is as follows. DNA ligase that seals nicks in double-stranded DNA during DNA replication, DNA recombination and DNA repair. In Anaeromyxobacter sp. (strain Fw109-5), this protein is Probable DNA ligase.